The primary structure comprises 177 residues: 3-hydroxyanthranilate 3,4-dioxygenase (177 aa).

O2 is bound at residue R47. Residues H51, E57, and H95 each coordinate Fe cation. Residue E57 participates in substrate binding. The substrate site is built by R99 and E110. Residues C125, C128, C162, and C165 each contribute to the Fe cation site.

Belongs to the 3-HAO family. In terms of assembly, homodimer. Fe(2+) serves as cofactor.

It carries out the reaction 3-hydroxyanthranilate + O2 = (2Z,4Z)-2-amino-3-carboxymuconate 6-semialdehyde. It functions in the pathway cofactor biosynthesis; NAD(+) biosynthesis; quinolinate from L-kynurenine: step 3/3. In terms of biological role, catalyzes the oxidative ring opening of 3-hydroxyanthranilate to 2-amino-3-carboxymuconate semialdehyde, which spontaneously cyclizes to quinolinate. This Burkholderia cenocepacia (strain ATCC BAA-245 / DSM 16553 / LMG 16656 / NCTC 13227 / J2315 / CF5610) (Burkholderia cepacia (strain J2315)) protein is 3-hydroxyanthranilate 3,4-dioxygenase.